Consider the following 142-residue polypeptide: Large ribosomal subunit protein uL11 (142 aa).

The protein belongs to the universal ribosomal protein uL11 family. In terms of assembly, part of the ribosomal stalk of the 50S ribosomal subunit. Interacts with L10 and the large rRNA to form the base of the stalk. L10 forms an elongated spine to which L12 dimers bind in a sequential fashion forming a multimeric L10(L12)X complex. One or more lysine residues are methylated.

Its function is as follows. Forms part of the ribosomal stalk which helps the ribosome interact with GTP-bound translation factors. In Lachnoclostridium phytofermentans (strain ATCC 700394 / DSM 18823 / ISDg) (Clostridium phytofermentans), this protein is Large ribosomal subunit protein uL11.